The primary structure comprises 449 residues: Bifunctional F420 biosynthesis protein FbiB (449 aa).

The segment at 1 to 245 (MSPAGEHGTA…PGTEDLFWLG (245 aa)) is coenzyme F420:L-glutamate ligase. GTP contacts are provided by residues 21-24 (LPEF), Ser51, and Lys56. Asp110 lines the a divalent metal cation pocket. Asn113 lines the GTP pocket. A divalent metal cation is bound by residues Asp151 and Thr152. Residues 246-449 (TAEAIELGRR…ADPGDLLIRK (204 aa)) form a dehydro-coenzyme F420-0 reductase region. Residues 261–265 (RRSVR) and Ala289 each bind FMN. Position 321 (Asp321) interacts with coenzyme F420-(gamma-Glu)n. 2 residues coordinate FMN: Gly400 and Arg437.

This sequence in the N-terminal section; belongs to the CofE family. It depends on Mg(2+) as a cofactor. Mn(2+) serves as cofactor. K(+) is required as a cofactor.

It carries out the reaction oxidized coenzyme F420-0 + GTP + L-glutamate = oxidized coenzyme F420-1 + GDP + phosphate + H(+). The catalysed reaction is oxidized coenzyme F420-1 + GTP + L-glutamate = oxidized coenzyme F420-2 + GDP + phosphate + H(+). The enzyme catalyses oxidized coenzyme F420-(gamma-L-Glu)(n) + GTP + L-glutamate = oxidized coenzyme F420-(gamma-L-Glu)(n+1) + GDP + phosphate + H(+). It catalyses the reaction oxidized coenzyme F420-0 + FMN + H(+) = dehydro coenzyme F420-0 + FMNH2. The protein operates within cofactor biosynthesis; coenzyme F420 biosynthesis. Its function is as follows. Bifunctional enzyme that catalyzes the GTP-dependent successive addition of multiple gamma-linked L-glutamates to the L-lactyl phosphodiester of 7,8-didemethyl-8-hydroxy-5-deazariboflavin (F420-0) to form polyglutamated F420 derivatives, and the FMNH2-dependent reduction of dehydro-F420-0 to form F420-0. The polypeptide is Bifunctional F420 biosynthesis protein FbiB (Mycobacterium avium (strain 104)).